We begin with the raw amino-acid sequence, 814 residues long: Lon protease 1 (814 aa).

A compositionally biased stretch (basic and acidic residues) spans 1–17 (MTDDRDKTNEDPEKIIE). Residues 1–28 (MTDDRDKTNEDPEKIIEADFNPEDPDDA) form a disordered region. The 197-residue stretch at 49–245 (LPIIPLRPRP…KVLVLLKKEL (197 aa)) folds into the Lon N-terminal domain. 398–405 (GPPGVGKT) is an ATP binding site. Residues 633-814 (EDVPGVVTGL…YRDVYQVAFG (182 aa)) form the Lon proteolytic domain. Active-site residues include Ser-721 and Lys-764.

Belongs to the peptidase S16 family. Homohexamer. Organized in a ring with a central cavity.

It is found in the cytoplasm. It catalyses the reaction Hydrolysis of proteins in presence of ATP.. ATP-dependent serine protease that mediates the selective degradation of mutant and abnormal proteins as well as certain short-lived regulatory proteins. Required for cellular homeostasis and for survival from DNA damage and developmental changes induced by stress. Degrades polypeptides processively to yield small peptide fragments that are 5 to 10 amino acids long. Binds to DNA in a double-stranded, site-specific manner. This Syntrophotalea carbinolica (strain DSM 2380 / NBRC 103641 / GraBd1) (Pelobacter carbinolicus) protein is Lon protease 1.